A 677-amino-acid polypeptide reads, in one-letter code: MPGTLFLIVGPSGVGKDTLLEGARDRLATSRWFSFPQRVVTRAADAGGEDYIPVTPSEFEQQLAAGAFWHQWHAHGLSYGIPMQVARDLDNGINVVLNASRNEIGAFRDKATHVVTIGISAPPGIVEERLHERGRESEEEIKRRLARLVEQAPLTGYALEIVNDRTIEEGITALVDLIAGACDLNAEITRFPVTIGSKQVCLVHKGNQIASRVLAGSSRVTLSLRGKSVSAELGETWSDEIVSQDLCALSEGAMAALDAVEGDVVSIERSPTPKSRSILQKKVRGGELSHAEMEAFIHDLVNGRFSTSEIAGFLVAASNNLTMDEVISLTQVRAAFAHRHDWGKAIVVDKHSMGGVPGNRITPIIIPILAAFGLTVPKTSSRAITSAAGTADMMEVLSRVDLSPDEMKSVVEQTNGCIAWNGNLTHSPVDDVMNAINRPLGLQSTLLDVSSIMSKKLAAGSTHVLIDMPVGPKAKTRTQGEAGALKNLFESVGQGIGLNTKVQISDGTKPIGRGVGPVLEALDVLSVLRGEAGAPTDLLDKSIGYAATILEWSGAVSQGQGAQVTRDLVSSGKAFEKLFEIRDAQGRQHDPLQPGQFTEDICADRSGRVEAIDIQGISEVARLSGAPKDKAAGVVLNVQVGDQIAEKQPLLRVHSSSLRGIEEAVCAAQAQSAFKIL.

Residues 1-187 (MPGTLFLIVG…IAGACDLNAE (187 aa)) are ribose 1,5-bisphosphokinase. Positions 188–677 (ITRFPVTIGS…AQAQSAFKIL (490 aa)) are thymidinephosphorylase.

In the N-terminal section; belongs to the ribose 1,5-bisphosphokinase family. This sequence in the C-terminal section; belongs to the thymidine/pyrimidine-nucleoside phosphorylase family. Type 2 subfamily.

The enzyme catalyses alpha-D-ribose 1,5-bisphosphate + ATP = 5-phospho-alpha-D-ribose 1-diphosphate + ADP. It carries out the reaction thymidine + phosphate = 2-deoxy-alpha-D-ribose 1-phosphate + thymine. Its pathway is metabolic intermediate biosynthesis; 5-phospho-alpha-D-ribose 1-diphosphate biosynthesis; 5-phospho-alpha-D-ribose 1-diphosphate from D-ribose 5-phosphate (route II): step 3/3. Its function is as follows. Catalyzes the phosphorylation of ribose 1,5-bisphosphate to 5-phospho-D-ribosyl alpha-1-diphosphate (PRPP). In Roseobacter denitrificans (strain ATCC 33942 / OCh 114) (Erythrobacter sp. (strain OCh 114)), this protein is Bifunctional ribose 1,5-bisphosphokinase-thymidine phosphorylase (phnN).